The sequence spans 407 residues: Inhibin beta B chain (407 aa).

An N-terminal signal peptide occupies residues 1-28 (MDGLPGRALGAACLLLLAAGWLGPEAWG). Positions 27 to 60 (WGSPTPPPSPAAPPPPPPPGALGGSQDTCTSCGG) are disordered. A propeptide spanning residues 29–292 (SPTPPPSPAA…VDSRHRIRKR (264 aa)) is cleaved from the precursor. Residues 30–46 (PTPPPSPAAPPPPPPPG) show a composition bias toward pro residues. N93 carries an N-linked (GlcNAc...) asparagine glycan. Cystine bridges form between C296/C304, C303/C372, C332/C404, and C336/C406.

It belongs to the TGF-beta family. Dimeric, linked by one or more disulfide bonds. Inhibin B is a dimer of alpha and beta-B. Activin B is a homodimer of beta-B. Activin AB is a dimer of beta-A and beta-B. Interacts with FST and FSTL3.

It is found in the secreted. In terms of biological role, inhibins and activins inhibit and activate, respectively, the secretion of follitropin by the pituitary gland. Inhibins/activins are involved in regulating a number of diverse functions such as hypothalamic and pituitary hormone secretion, gonadal hormone secretion, germ cell development and maturation, erythroid differentiation, insulin secretion, nerve cell survival, embryonic axial development or bone growth, depending on their subunit composition. Inhibins appear to oppose the functions of activins. Its function is as follows. Activin B is a dimer of alpha and beta-B that plays a role in several essential biological processes including embryonic development, stem cell maintenance and differentiation, haematopoiesis, cell proliferation and wound healing. Signals through type I receptor ACVR1C, abundantly expressed in pancreatic beta cells, and type II receptors like ACVR2A. Upon ligand binding, these receptors phosphorylate intracellular signaling mediators SMAD2 and SMAD3, which form a complex with SMAD4, translocate to the nucleus, and regulate gene expression. Plays a crucial role in the induction of hepcidin by inflammation through activation of ACVR1C and subsequent phosphorylation of SMAD1/5/8. Regulates adipocyte lipid metabolism by decreasing non-esterified fatty acids and glycerol release and increases intracellular triglyceride content. Stimulates wound healing by promoting cell migration and hair follicle regeneration through the JNK and ERK signaling pathways downstream of RHOA. Inhibin B is a dimer of alpha and beta-B that plays a crucial role in the regulation of the reproductive system by inhibiting the secretion of follicle-stimulating hormone (FSH) from the anterior pituitary gland. Thereby, maintains reproductive homeostasis in both males and females. Acts as a more potent suppressor of FSH release than inhibin A. Functions as competitive receptor antagonist binding activin type II receptors with high affinity in the presence of the TGF-beta type III coreceptor/TGFBR3L. The sequence is that of Inhibin beta B chain (INHBB) from Sus scrofa (Pig).